Reading from the N-terminus, the 236-residue chain is 2-C-methyl-D-erythritol 4-phosphate cytidylyltransferase (236 aa).

This sequence belongs to the IspD/TarI cytidylyltransferase family. IspD subfamily. As to quaternary structure, homodimer.

The catalysed reaction is 2-C-methyl-D-erythritol 4-phosphate + CTP + H(+) = 4-CDP-2-C-methyl-D-erythritol + diphosphate. The protein operates within isoprenoid biosynthesis; isopentenyl diphosphate biosynthesis via DXP pathway; isopentenyl diphosphate from 1-deoxy-D-xylulose 5-phosphate: step 2/6. Catalyzes the formation of 4-diphosphocytidyl-2-C-methyl-D-erythritol from CTP and 2-C-methyl-D-erythritol 4-phosphate (MEP). This chain is 2-C-methyl-D-erythritol 4-phosphate cytidylyltransferase, found in Salmonella heidelberg (strain SL476).